A 61-amino-acid polypeptide reads, in one-letter code: Large ribosomal subunit protein uL30 (61 aa).

The protein belongs to the universal ribosomal protein uL30 family. As to quaternary structure, part of the 50S ribosomal subunit.

The protein is Large ribosomal subunit protein uL30 of Frankia casuarinae (strain DSM 45818 / CECT 9043 / HFP020203 / CcI3).